The sequence spans 228 residues: Aquaporin Z (228 aa).

5 helical membrane passes run 1-21 (MLNK…GGCG), 46-66 (TVLT…NPAV), 82-102 (IPYW…LYVI), 129-149 (MMAG…IILG), and 154-174 (LAPA…IHLV). Positions 63–65 (NPA) match the NPA 1 motif. Positions 184–186 (NPA) match the NPA 2 motif. Residues 205–225 (LFWVAPLVGAVIGAIIWKGLL) traverse the membrane as a helical segment.

The protein belongs to the MIP/aquaporin (TC 1.A.8) family. Homotetramer.

It localises to the cell inner membrane. It carries out the reaction H2O(in) = H2O(out). Channel that permits osmotically driven movement of water in both directions. It is involved in the osmoregulation and in the maintenance of cell turgor during volume expansion in rapidly growing cells. It mediates rapid entry or exit of water in response to abrupt changes in osmolarity. The sequence is that of Aquaporin Z from Brucella suis biovar 1 (strain 1330).